We begin with the raw amino-acid sequence, 679 residues long: Stress-70 protein, mitochondrial (679 aa).

The N-terminal 46 residues, M1–Y46, are a transit peptide targeting the mitochondrion. Positions M1 to V432 are interaction with NFS1. 2 residues coordinate ADP: T63 and N64. Residues T63–D431 form a nucleotide-binding domain (NBD) region. K76 bears the N6-acetyllysine mark. The residue at position 87 (T87) is a Phosphothreonine. Residues K135 and K138 each carry the N6-acetyllysine; alternate modification. 2 positions are modified to N6-succinyllysine; alternate: K135 and K138. K143 bears the N6-acetyllysine mark. K206 bears the N6-acetyllysine; alternate mark. At K206 the chain carries N6-succinyllysine; alternate. At K206 the chain carries N6-malonyllysine; alternate. N6-acetyllysine occurs at positions 234 and 288. An N6-acetyllysine; alternate modification is found at K300. At K300 the chain carries N6-succinyllysine; alternate. The ADP site is built by E313, K316, and S320. An N6-succinyllysine modification is found at K368. The ADP site is built by G388 and R391. Position 394 is an N6-succinyllysine (K394). The residue at position 408 (S408) is a Phosphoserine. Residues V432–T441 form an interdomain linker region. The tract at residues V432–Q679 is interaction with FXN and ISCU. The interval P442–Q679 is substrate-binding domain (SBD). R513 bears the Omega-N-methylarginine mark. Residues K567 and K600 each carry the N6-acetyllysine; alternate modification. 2 positions are modified to N6-succinyllysine; alternate: K567 and K600. K610 carries the post-translational modification N6-succinyllysine. N6-acetyllysine is present on K612. Residue K646 is modified to N6-acetyllysine; alternate. The residue at position 646 (K646) is an N6-succinyllysine; alternate. A disordered region spans residues A656–Q679. The segment covering E669–Q679 has biased composition (basic and acidic residues).

It belongs to the heat shock protein 70 family. As to quaternary structure, interacts strongly with the intermediate form of FXN and weakly with its mature form. Interacts with HSCB. Associates with the mitochondrial contact site and cristae organizing system (MICOS) complex, composed of at least MICOS10/MIC10, CHCHD3/MIC19, CHCHD6/MIC25, APOOL/MIC27, IMMT/MIC60, APOO/MIC23/MIC26 and QIL1/MIC13. This complex was also known under the names MINOS or MitOS complex. The MICOS complex associates with mitochondrial outer membrane proteins SAMM50, MTX1, MTX2 and DNAJC11, mitochondrial inner membrane protein TMEM11 and with HSPA9. Interacts with DNLZ, the interaction is required to prevent self-aggregation. Interacts with TESPA1. Interacts with PDPN. Interacts with NFU1, NFS1 and ISCU. Interacts with TP53; the interaction promotes TP53 degradation. Interacts (via SBD domain) with UBXN2A; the interaction with UBXN2A inhibits HSPA9/MOT-2 interaction with and degradation of TP53, thereby promotes TP53 translocation to the nucleus. Interacts with ITPR1 AND VDAC1; this interaction couples ITPR1 to VDAC1. Component of the TIM23 mitochondrial inner membrane pre-sequence translocase complex.

It is found in the mitochondrion. The protein resides in the nucleus. Its subcellular location is the nucleolus. The protein localises to the cytoplasm. It localises to the mitochondrion matrix. It catalyses the reaction ATP + H2O = ADP + phosphate + H(+). The chaperone activity is regulated by ATP-induced allosteric coupling of the nucleotide-binding (NBD) and substrate-binding (SBD) domains. ATP binding in the nucleotide-binding pocket (NBP) leads to a conformational change in the NBD, which is transferred through the interdomain linker (IDL) to the substrate-binding domain (SBD). This elicits a reduced substrate affinity and a faster substrate exchange rate. Upon hydrolysis of ATP to ADP, the protein undergoes a conformational change that increases its affinity for substrate proteins. It cycles through repeated phases of ATP hydrolysis and nucleotide exchange, facilitating repeated cycles of substrate binding and release. Functions in collaboration with co-chaperones. Functions with the co-chaperone, DNLZ, to maintain solubility and regulate ATP hydrolysis. Nucleotide exchange factors, GRPEL1 and GRPEL2, accelerate nucleotide exchange. Its function is as follows. Mitochondrial chaperone that plays a key role in mitochondrial protein import, folding, and assembly. Plays an essential role in the protein quality control system, the correct folding of proteins, the re-folding of misfolded proteins, and the targeting of proteins for subsequent degradation. These processes are achieved through cycles of ATP binding, ATP hydrolysis, and ADP release, mediated by co-chaperones. In mitochondria, it associates with the TIM (translocase of the inner membrane) protein complex to assist in the import and folding of mitochondrial proteins. Plays an important role in mitochondrial iron-sulfur cluster (ISC) biogenesis, interacts with and stabilizes ISC cluster assembly proteins FXN, NFU1, NFS1 and ISCU. Regulates erythropoiesis via stabilization of ISC assembly. Regulates mitochondrial calcium-dependent apoptosis by coupling two calcium channels, ITPR1 and VDAC1, at the mitochondria-associated endoplasmic reticulum (ER) membrane to facilitate calcium transport from the ER lumen to the mitochondria intermembrane space, providing calcium for the downstream calcium channel MCU, which releases it into the mitochondrial matrix. Although primarily located in the mitochondria, it is also found in other cellular compartments. In the cytosol, it associates with proteins involved in signaling, apoptosis, or senescence. It may play a role in cell cycle regulation via its interaction with and promotion of degradation of TP53. May play a role in the control of cell proliferation and cellular aging. Protects against reactive oxygen species (ROS). Extracellular HSPA9 plays a cytoprotective role by preventing cell lysis following immune attack by the membrane attack complex by disrupting formation of the complex. This chain is Stress-70 protein, mitochondrial, found in Pongo abelii (Sumatran orangutan).